A 308-amino-acid chain; its full sequence is 1-acyl-sn-glycerol-3-phosphate acyltransferase (308 aa).

The next 3 helical transmembrane spans lie at 65-85 (FLSM…LLPW), 124-144 (AIYI…WLIP), and 148-168 (VTIA…YVLA). Residues 130-135 (HASLVD) carry the HXXXXD motif motif.

This sequence belongs to the 1-acyl-sn-glycerol-3-phosphate acyltransferase family.

It localises to the membrane. The catalysed reaction is a 1-acyl-sn-glycero-3-phosphate + an acyl-CoA = a 1,2-diacyl-sn-glycero-3-phosphate + CoA. Converts lysophosphatidic acid (LPA) into phosphatidic acid by incorporating acyl moiety at the 2 position. This enzyme shows a preference for medium-chain-length fatty acyl-coenzyme a substrates. In Cocos nucifera (Coconut palm), this protein is 1-acyl-sn-glycerol-3-phosphate acyltransferase.